The primary structure comprises 289 residues: MKLIVGTRGSKLALAQTNKVAERLKERYEVEIRIVKTAGDIMKDKPLYEFKGMGAFVRALDTALAEGKVDVAVHSFKDVPSQRVEGTVVAAVIERDSPCDVLISRDGSTLEELDEGAVVGTSSLRRRAQLSRLRGDLRFENLRGNLDTRLRKLREGNYDAIVVAEAGLKRLGLDREVEYQPFPPEVIVPPANQGIIAIATRKGEEDLVAFLNDEKTWLEAMVERAVIKELGVGCAVPVGVYAEAQSRVRLICEILDKKYLRVEEKLSKDTAVEEAAEIGKDLRKEIYGG.

Cys-234 is modified (S-(dipyrrolylmethanemethyl)cysteine).

This sequence belongs to the HMBS family. Requires dipyrromethane as cofactor.

It catalyses the reaction 4 porphobilinogen + H2O = hydroxymethylbilane + 4 NH4(+). It functions in the pathway porphyrin-containing compound metabolism; protoporphyrin-IX biosynthesis; coproporphyrinogen-III from 5-aminolevulinate: step 2/4. Its function is as follows. Tetrapolymerization of the monopyrrole PBG into the hydroxymethylbilane pre-uroporphyrinogen in several discrete steps. The sequence is that of Probable porphobilinogen deaminase (hemC) from Archaeoglobus fulgidus (strain ATCC 49558 / DSM 4304 / JCM 9628 / NBRC 100126 / VC-16).